The following is a 310-amino-acid chain: Protein N-terminal asparagine amidohydrolase (310 aa).

As to quaternary structure, monomer.

Its subcellular location is the cytoplasm. It carries out the reaction N-terminal L-asparaginyl-[protein] + H2O + H(+) = N-terminal L-aspartyl-[protein] + NH4(+). In terms of biological role, N-terminal asparagine deamidase that mediates deamidation of N-terminal asparagine residues to aspartate. Required for the ubiquitin-dependent turnover of intracellular proteins that initiate with Met-Asn. These proteins are acetylated on the retained initiator methionine and can subsequently be modified by the removal of N-acetyl methionine by acylaminoacid hydrolase (AAH). Conversion of the resulting N-terminal asparagine to aspartate by NTAN1/PNAD renders the protein susceptible to arginylation, polyubiquitination and degradation as specified by the N-end rule. This enzyme does not act on substrates with internal or C-terminal asparagines and does not act on glutamine residues in any position. This Mus musculus (Mouse) protein is Protein N-terminal asparagine amidohydrolase.